The chain runs to 656 residues: MKREAFSPSASSTGAGTPLIELAGITRSFRNGEIETRVLHGIDLTIYPGEFVAIVGASGSGKSTLMNILGCLDRPSSGTYRFMGEDVAGFDRDELARLRREAFGFVFQSYNLLGGASARENVEVPAVYSGMPPAERHARAEQLLASLGLGERSHHRPSQLSGGQQQRVSIARALMNGGRIILADEPTGALDSRSGEEVMKLLRQLSAEGHTIILITHAREVAEMAQRIIEIRDGHIVADPGPSKPQGPEPDFAPHVDRTSSMSDLVEATRTALRALRANLFRSALTLLGIVIGVASVIAMLAIGDGAKAKVVDQISAMGTNLLTVRPGAPNQRGRETTATLVIEDVRAIAELPNVLASVPEQSASVTLRADNTDQRTTANATSWNYGVARNWPVASGTFFSAEDEARYATVAVLGQTTAGALFPGVDPIGQYVLVNNIPFQVIGVMSPKGATPWGQDQDDIVFVPFTTGSLRVTGQRYLRNVTVAVEDVSRIDATQNEVSQLLLARHGVEDFQIRNMASVIDTVSATQNTLTILLGTVAAISLLVGGIGVMNIMLVSVTERTREIGIRMATGARMKNILQQFLIEALVVSALGGLIGVAVGLGTAAVIALFDTPIKYSLLPVVLAFGCAFATGLVFGYLPARKAARLDPVVALASE.

The 239-residue stretch at 20–258 folds into the ABC transporter domain; it reads IELAGITRSF…EPDFAPHVDR (239 aa). 56–63 contributes to the ATP binding site; that stretch reads GASGSGKS. 4 helical membrane-spanning segments follow: residues 284-304, 531-551, 591-611, and 619-639; these read ALTL…LAIG, LTIL…IGVM, ALGG…IALF, and LLPV…FGYL.

Belongs to the ABC transporter superfamily. Macrolide exporter (TC 3.A.1.122) family. In terms of assembly, homodimer.

It is found in the cell inner membrane. Its function is as follows. Non-canonical ABC transporter that contains transmembrane domains (TMD), which form a pore in the inner membrane, and an ATP-binding domain (NBD), which is responsible for energy generation. Confers resistance against macrolides. This Azoarcus sp. (strain BH72) protein is Macrolide export ATP-binding/permease protein MacB.